A 369-amino-acid polypeptide reads, in one-letter code: Homoserine O-succinyltransferase (369 aa).

The disordered stretch occupies residues 1–21 (MVRIVPSARRTRAPAKLDGRS). One can recognise an AB hydrolase-1 domain in the interval 86-350 (VVFVAGGISA…PFGHDAFLKE (265 aa)). An important for substrate specificity region spans residues 92-95 (GISA). Serine 172 acts as the Nucleophile in catalysis. A substrate-binding site is contributed by arginine 233. Catalysis depends on residues aspartate 314 and histidine 344. Aspartate 345 contacts substrate.

It belongs to the AB hydrolase superfamily. MetX family. In terms of assembly, homodimer.

The protein resides in the cytoplasm. It catalyses the reaction L-homoserine + succinyl-CoA = O-succinyl-L-homoserine + CoA. The protein operates within amino-acid biosynthesis; L-methionine biosynthesis via de novo pathway; O-succinyl-L-homoserine from L-homoserine: step 1/1. Transfers a succinyl group from succinyl-CoA to L-homoserine, forming succinyl-L-homoserine. The chain is Homoserine O-succinyltransferase from Xanthomonas campestris pv. campestris (strain ATCC 33913 / DSM 3586 / NCPPB 528 / LMG 568 / P 25).